A 361-amino-acid polypeptide reads, in one-letter code: Glutamate 5-kinase (361 aa).

An ATP-binding site is contributed by Lys-7. The substrate site is built by Ser-47, Asp-134, and Asn-146. ATP-binding positions include 166–167 (TD) and 209–215 (TGGMTTK). A PUA domain is found at 274 to 345 (LGTLQLDEGA…EAIETQMSTN (72 aa)).

The protein belongs to the glutamate 5-kinase family.

The protein localises to the cytoplasm. The enzyme catalyses L-glutamate + ATP = L-glutamyl 5-phosphate + ADP. The protein operates within amino-acid biosynthesis; L-proline biosynthesis; L-glutamate 5-semialdehyde from L-glutamate: step 1/2. Catalyzes the transfer of a phosphate group to glutamate to form L-glutamate 5-phosphate. The chain is Glutamate 5-kinase from Prochlorococcus marinus (strain MIT 9313).